A 405-amino-acid polypeptide reads, in one-letter code: Dematin (405 aa).

Disordered stretches follow at residues 1 to 29 (MERL…SPSS), 81 to 100 (SREC…PEVW), and 108 to 332 (IISQ…DRGN). The span at 11–29 (SPGSVSSSRDSSVPGSPSS) shows a compositional bias: low complexity. Phosphoserine occurs at positions 16, 18, 26, 92, 96, 110, and 113. Positions 113-124 (STPRTTGTPRTS) are enriched in low complexity. The residue at position 114 (threonine 114) is a Phosphothreonine. Residues serine 156 and serine 226 each carry the phosphoserine modification. Residues 216 to 228 (EEEEEEEDDDSEE) are compositionally biased toward acidic residues. Positions 224–308 (DDSEEEIKAI…SRLQSTEFSP (85 aa)) are interaction with RASGRF2. Basic and acidic residues-rich tracts occupy residues 229–242 (EIKA…EELS) and 252–261 (ILKEEMEKSL). Residues serine 269, serine 279, serine 289, serine 303, serine 315, serine 333, serine 372, and serine 383 each carry the phosphoserine modification. A compositionally biased stretch (low complexity) spans 277–292 (HTSLHSGTSKSSSLPS). The segment covering 294 to 322 (GRTTLSRLQSTEFSPSGSEAGSPGLQNGE) has biased composition (polar residues). The region spanning 337–405 (VLEQKIYPYE…NELKKKASLF (69 aa)) is the HP domain. Serine 403 bears the Phosphoserine; by PKA mark.

The protein belongs to the villin/gelsolin family. Monomeric (isoform 2); under reducing conditions. Self-associates. Exists under oxidizing condition as a trimer of two isoforms 2 and isoform 1 linked by disulfide bonds. Found in a complex with DMTN, F-actin and spectrin. Found in a complex with ADD2, DMTN and SLC2A1. Interacts with F-actin, ITPKB and spectrin. Isoform 2 interacts with SLC2A1 (via C-terminus cytoplasmic region). Interacts with RASGRF2. Post-translationally, phosphorylated. Phosphorylation at Ser-403 by PKA causes the C-terminal headpiece domain to associate with the N-terminal core domain, and leads to the inhibition of its actin bundling activity. As to expression, expressed in platelets. Isoform 1 and isoform 2 are expressed in mature erythrocytes (at protein level).

The protein resides in the cytoplasm. It localises to the cytosol. Its subcellular location is the perinuclear region. It is found in the cytoskeleton. The protein localises to the cell membrane. The protein resides in the membrane. It localises to the endomembrane system. Its subcellular location is the cell projection. In terms of biological role, membrane-cytoskeleton-associated protein with F-actin-binding activity that induces F-actin bundles formation and stabilization. Its F-actin-bundling activity is reversibly regulated upon its phosphorylation by the cAMP-dependent protein kinase A (PKA). Binds to the erythrocyte membrane glucose transporter-1 SLC2A1/GLUT1, and hence stabilizes and attaches the spectrin-actin network to the erythrocytic plasma membrane. Plays a role in maintaining the functional integrity of PKA-activated erythrocyte shape and the membrane mechanical properties. Also plays a role as a modulator of actin dynamics in fibroblasts; acts as a negative regulator of the RhoA activation pathway. In platelets, functions as a regulator of internal calcium mobilization across the dense tubular system that affects platelet granule secretion pathways and aggregation. Also required for the formation of a diverse set of cell protrusions, such as filopodia and lamellipodia, necessary for platelet cell spreading, motility and migration. Acts as a tumor suppressor and inhibits malignant cell transformation. The sequence is that of Dematin (Dmtn) from Mus musculus (Mouse).